A 363-amino-acid chain; its full sequence is Forkhead box protein I1 (363 aa).

The span at 1–18 (MNPVQQPAQQRSPASSLP) shows a compositional bias: low complexity. Disordered stretches follow at residues 1-24 (MNPV…KRAQ), 210-269 (DNGN…SPPA), and 344-363 (TTAQ…QGRY). The segment at residues 125-219 (RPPYSYSALI…DNGNFRRKRK (95 aa)) is a DNA-binding region (fork-head). Residues 231–243 (KIGEDHLNPKGKE) are compositionally biased toward basic and acidic residues. 2 stretches are compositionally biased toward low complexity: residues 244 to 258 (SPPM…EPSP) and 347 to 363 (QKQP…QGRY).

The protein resides in the nucleus. Its function is as follows. Transcription factor. Essential for ventral specification of the early cephalic (head) ectoderm during gastrulation, playing a role in the 'non-neural' versus 'neural' cell fate choice. Binds to DNA via the target sequence 5'-[AG]TAAA[CT]A-3', with 5'-ATAAACA-3' being the preferred binding site. In Xenopus tropicalis (Western clawed frog), this protein is Forkhead box protein I1.